The chain runs to 183 residues: Probable chorismate pyruvate-lyase 2 (183 aa).

Residues Arg-76, Leu-114, and Glu-166 each coordinate substrate.

The protein belongs to the UbiC family.

It is found in the cytoplasm. The enzyme catalyses chorismate = 4-hydroxybenzoate + pyruvate. Its pathway is cofactor biosynthesis; ubiquinone biosynthesis. Functionally, removes the pyruvyl group from chorismate, with concomitant aromatization of the ring, to provide 4-hydroxybenzoate (4HB) for the ubiquinone pathway. In Pseudomonas fluorescens (strain Pf0-1), this protein is Probable chorismate pyruvate-lyase 2.